The sequence spans 557 residues: MSNPRHNEREVRSPRGDELNAKSWLTEAPLRMLMNNLDPDVAERPHELVVYGGIGRAARTWDDFDRIVATLKTLNDDETLLVQSGKPVGVFRTHKDAPRVLIANSNLVPHWANWDHFNELDKKGLAMYGQMTAGSWIYIGAQGIVQGTYETFVEAGRQHYGGNLKGRWILTGGLGGMGGAQPLAAVMAGACCLAVECDETRADFRLRTRYVDEKTHSLDEALAKIDAWTKAGEAKSIALIGNAAEIFPELVKRGVKPDIVTDQTSAHDPVHGYLPLGWTVAEWRAKQENDPKAVEKAARASMKVQVQAMLDFWNAGIPTVDYGNNIRQMALEEGLENAFAFPGFVPAYIRPLFCRGIGPFRWAALSGDPEDIAKTDAKVKELLPDNKHLHNWLDMAKERIAFQGLPARICWVGLGDRHRLGLAFNEMVRNGELKAPIVIGRDHLDSGSVASPNRKTEAMKDGSDAVSDWPLLNALLNTASGATWVSLHHGGGVGMGFSQHAGMVICCDGTEDADRRLERVLWNDPATGVMRHADAGYDIALDWARKQGLRLPAILGN.

The interval 1–20 (MSNPRHNEREVRSPRGDELN) is disordered. NAD(+)-binding positions include 52 to 53 (GG), glutamine 130, 176 to 178 (GMG), glutamate 196, arginine 201, 242 to 243 (NA), 263 to 267 (QTSAH), 273 to 274 (YL), and tyrosine 322. Residue cysteine 410 is part of the active site. Glycine 492 lines the NAD(+) pocket.

The protein belongs to the urocanase family. NAD(+) serves as cofactor.

It localises to the cytoplasm. The enzyme catalyses 4-imidazolone-5-propanoate = trans-urocanate + H2O. It participates in amino-acid degradation; L-histidine degradation into L-glutamate; N-formimidoyl-L-glutamate from L-histidine: step 2/3. Its function is as follows. Catalyzes the conversion of urocanate to 4-imidazolone-5-propionate. The sequence is that of Urocanate hydratase from Brucella melitensis biotype 2 (strain ATCC 23457).